The sequence spans 161 residues: Insulin-like growth factor 1, juvenile form (161 aa).

Residues 45–73 (GPETLCGAELVDTLQFVCGDRGFYFSKPT) form a b region. 3 cysteine pairs are disulfide-bonded: Cys50–Cys92, Cys62–Cys105, and Cys91–Cys96. The c stretch occupies residues 74-85 (GYGPSSRRSHNR). The interval 86 to 106 (GIVDECCFQSCELRRLEMYCA) is a. The segment at 107–114 (PVKPGKTP) is d. A disordered region spans residues 111-161 (GKTPRSVRAQRHTDSPRTAKKPLPGQSHSSYKEVHQKNSSRGNTGGRNYRI). The propeptide at 115 to 161 (RSVRAQRHTDSPRTAKKPLPGQSHSSYKEVHQKNSSRGNTGGRNYRI) is e peptide.

The protein belongs to the insulin family.

The protein resides in the secreted. Functionally, the insulin-like growth factors, isolated from plasma, are structurally and functionally related to insulin but have a much higher growth-promoting activity. Acts as a ligand for IGF1R. Binds to the alpha subunit of IGF1R, leading to the activation of the intrinsic tyrosine kinase activity which autophosphorylates tyrosine residues in the beta subunit thus initiatiating a cascade of down-stream signaling events leading to activation of the PI3K-AKT/PKB and the Ras-MAPK pathways. Binds to integrins. Its binding to integrins and subsequent ternary complex formation with integrins and IGFR1 are essential for IGF1 signaling. This Cyprinus carpio (Common carp) protein is Insulin-like growth factor 1, juvenile form.